The following is a 362-amino-acid chain: Ferredoxin--NADP reductase 1 (362 aa).

FAD-binding residues include D47, Q55, Y60, A100, F141, D309, and S350.

It belongs to the ferredoxin--NADP reductase type 2 family. Homodimer. Requires FAD as cofactor.

It catalyses the reaction 2 reduced [2Fe-2S]-[ferredoxin] + NADP(+) + H(+) = 2 oxidized [2Fe-2S]-[ferredoxin] + NADPH. This Cupriavidus pinatubonensis (strain JMP 134 / LMG 1197) (Cupriavidus necator (strain JMP 134)) protein is Ferredoxin--NADP reductase 1.